The primary structure comprises 249 residues: RNA polymerase sigma factor SigI3 (249 aa).

The short motif at 60 to 73 (EEFSIGLAAFNEAI) is the Polymerase core binding element. A DNA-binding region (H-T-H motif) is located at residues 199 to 218 (MKEVLSRIKVNHKTIQRNRK).

It belongs to the sigma-70 factor family. SigI subfamily. As to quaternary structure, interacts with RsgI3.

Its subcellular location is the cytoplasm. Its activity is regulated as follows. Negatively regulated by the anti-sigma-I factor RsgI3. Binding of the polysaccharide substrate to RsgI3 may lead to the release and activation of SigI3. Functionally, sigma factors are initiation factors that promote the attachment of RNA polymerase to specific initiation sites and are then released. This sigma factor is involved in regulation of cellulosomal genes via an external polysaccharide-sensing mechanism. Recognizes the predicted promoters associated with sigI3 itself, pl11, ce12 and cipA. The chain is RNA polymerase sigma factor SigI3 from Acetivibrio thermocellus (strain ATCC 27405 / DSM 1237 / JCM 9322 / NBRC 103400 / NCIMB 10682 / NRRL B-4536 / VPI 7372) (Clostridium thermocellum).